The sequence spans 350 residues: UDP-N-acetylenolpyruvoylglucosamine reductase (350 aa).

In terms of domain architecture, FAD-binding PCMH-type spans 24–195; the sequence is HVEATARWLL…VAVEFNLPLL (172 aa). Residue arginine 172 is part of the active site. The Proton donor role is filled by serine 245. Glutamate 342 is a catalytic residue.

The protein belongs to the MurB family. It depends on FAD as a cofactor.

The protein resides in the cytoplasm. The catalysed reaction is UDP-N-acetyl-alpha-D-muramate + NADP(+) = UDP-N-acetyl-3-O-(1-carboxyvinyl)-alpha-D-glucosamine + NADPH + H(+). It functions in the pathway cell wall biogenesis; peptidoglycan biosynthesis. In terms of biological role, cell wall formation. This Xanthomonas oryzae pv. oryzae (strain MAFF 311018) protein is UDP-N-acetylenolpyruvoylglucosamine reductase.